The primary structure comprises 221 residues: Protein RER1D (221 aa).

Transmembrane regions (helical) follow at residues 41 to 58 (IVRR…YIYR), 64 to 84 (GYFV…IGFL), 128 to 148 (FVVA…FWPI), and 149 to 169 (LLCY…VHMF). The tract at residues 200 to 221 (KGDGGDDRPSSSNSSQGNEKQD) is disordered. Positions 209–221 (SSSNSSQGNEKQD) are enriched in polar residues.

This sequence belongs to the RER1 family.

The protein localises to the membrane. Involved in the retrieval of endoplasmic reticulum membrane proteins from the early Golgi compartment. This is Protein RER1D from Arabidopsis thaliana (Mouse-ear cress).